The sequence spans 75 residues: UPF0352 protein VP2129 (75 aa).

This sequence belongs to the UPF0352 family.

The chain is UPF0352 protein VP2129 from Vibrio parahaemolyticus serotype O3:K6 (strain RIMD 2210633).